Here is a 323-residue protein sequence, read N- to C-terminus: Cobalamin biosynthesis protein CobD (323 aa).

Transmembrane regions (helical) follow at residues 52–72, 73–93, 154–174, 214–234, and 294–314; these read IAGV…TWLM, VWGS…LLSS, DGII…GMAF, ALLM…AASI, and IRLM…TAAL.

The protein belongs to the CobD/CbiB family.

The protein resides in the cell membrane. It participates in cofactor biosynthesis; adenosylcobalamin biosynthesis. In terms of biological role, converts cobyric acid to cobinamide by the addition of aminopropanol on the F carboxylic group. The chain is Cobalamin biosynthesis protein CobD from Pelobacter propionicus (strain DSM 2379 / NBRC 103807 / OttBd1).